A 66-amino-acid polypeptide reads, in one-letter code: Beta-toxin ChFII.9 (66 aa).

Residues 1 to 66 form the LCN-type CS-alpha/beta domain; sequence KEGYIVDYHT…VWPLPNKRCK (66 aa). 4 cysteine pairs are disulfide-bonded: Cys12/Cys65, Cys16/Cys41, Cys25/Cys46, and Cys29/Cys48. The residue at position 66 (Lys66) is a Lysine amide.

As to expression, expressed by the venom gland.

The protein resides in the secreted. Beta toxins bind voltage independently at site-4 of sodium channels (Nav) and shift the activation voltage toward more negative potentials, thereby affecting sodium channel activation CC and promoting spontaneous and repetitive firing. This chain is Beta-toxin ChFII.9, found in Centruroides hirsutipalpus (Scorpion).